Consider the following 484-residue polypeptide: Cysteine--tRNA ligase (484 aa).

Cysteine 29 lines the Zn(2+) pocket. The 'HIGH' region motif lies at 31–41; sequence PTVQSAPHIGH. Residues cysteine 219, histidine 244, and glutamate 248 each contribute to the Zn(2+) site. The 'KMSKS' region signature appears at 275–279; it reads KMSKS. Lysine 278 contacts ATP.

This sequence belongs to the class-I aminoacyl-tRNA synthetase family. In terms of assembly, monomer. It depends on Zn(2+) as a cofactor.

The protein localises to the cytoplasm. The catalysed reaction is tRNA(Cys) + L-cysteine + ATP = L-cysteinyl-tRNA(Cys) + AMP + diphosphate. This is Cysteine--tRNA ligase from Clavibacter sepedonicus (Clavibacter michiganensis subsp. sepedonicus).